The chain runs to 244 residues: MDMKKRIHLELRNRTPADVKELVLDNCRSKEGKIEGLTDEFEGLEFLSTINVCLSSIANLPKLNKLKKLELSDNNISGGLEVLAEKCPNLTHLNLSGNRIKDLSTIEPLKKLEHLKSLDLFNCEVTNLNDYRENLFKLLPQLTYLDGYDRDDKEAPDSDAEGYVEGLDDDEDDEDEDDYDEDVPPGEEGEDDDDEEEGEEEEVSGEEEEDEDASREGEEDEGDEEAEHGEKRKRDQDDEGEDDD.

4 LRR repeats span residues 18–41, 43–64, 65–87, and 89–110; these read DVKELVLDNCRSKEGKIEGLTDEF, GLEFLSTINVCLSSIANLPKLN, KLKKLELSDNNISGGLEVLAEKC, and NLTHLNLSGNRIKDLSTIEPLK. Residues 123-161 form the LRRCT domain; the sequence is CEVTNLNDYRENLFKLLPQLTYLDGYDRDDKEAPDSDAE. Residues 148-244 form a disordered region; it reads YDRDDKEAPD…DQDDEGEDDD (97 aa). The segment covering 157–227 has biased composition (acidic residues); that stretch reads DSDAEGYVEG…EEDEGDEEAE (71 aa).

The protein belongs to the ANP32 family. Post-translationally, phosphorylated on serine residues.

Its subcellular location is the nucleus. It is found in the cytoplasm. It localises to the endoplasmic reticulum. In terms of biological role, implicated in a number of cellular processes, including proliferation, differentiation, caspase-dependent and caspase-independent apoptosis, suppression of transformation (tumor suppressor), inhibition of protein phosphatase 2A, regulation of mRNA trafficking and stability, and inhibition of acetyltransferases as part of the INHAT (inhibitor of histone acetyltransferases) complex. The chain is Acidic leucine-rich nuclear phosphoprotein 32 family member A (anp32a) from Xenopus laevis (African clawed frog).